Here is a 276-residue protein sequence, read N- to C-terminus: Type II pantothenate kinase (276 aa).

ATP is bound at residue 8–15 (DAGGTLTK). The active-site Proton acceptor is glutamate 76. ATP-binding positions include threonine 105, 127-131 (GGTIM), phenylalanine 143, and serine 230.

This sequence belongs to the type II pantothenate kinase family. In terms of assembly, homodimer.

It localises to the cytoplasm. The catalysed reaction is (R)-pantothenate + ATP = (R)-4'-phosphopantothenate + ADP + H(+). Its pathway is cofactor biosynthesis; coenzyme A biosynthesis; CoA from (R)-pantothenate: step 1/5. In terms of biological role, catalyzes the phosphorylation of pantothenate (Pan), the first step in CoA biosynthesis. The protein is Type II pantothenate kinase of Bacillus anthracis.